The sequence spans 441 residues: DNA primase DnaG (441 aa).

In terms of domain architecture, Toprim spans 165–241; that stretch reads DTIIIVEGRA…DIDYVARAPP (77 aa). Positions 171, 215, and 217 each coordinate Mg(2+). Over residues 299-315 the composition is skewed to basic and acidic residues; it reads KEEVAERGEEMESKAEG. The disordered stretch occupies residues 299–320; the sequence is KEEVAERGEEMESKAEGAEQPT.

It belongs to the archaeal DnaG primase family. As to quaternary structure, forms a ternary complex with MCM helicase and DNA. Component of the archaeal exosome complex. Mg(2+) is required as a cofactor.

It carries out the reaction ssDNA + n NTP = ssDNA/pppN(pN)n-1 hybrid + (n-1) diphosphate.. Functionally, RNA polymerase that catalyzes the synthesis of short RNA molecules used as primers for DNA polymerase during DNA replication. Also part of the exosome, which is a complex involved in RNA degradation. Acts as a poly(A)-binding protein that enhances the interaction between heteromeric, adenine-rich transcripts and the exosome. The sequence is that of DNA primase DnaG from Ignicoccus hospitalis (strain KIN4/I / DSM 18386 / JCM 14125).